We begin with the raw amino-acid sequence, 249 residues long: Hydroxyacylglutathione hydrolase (249 aa).

Residues His54, His56, Asp58, His59, His113, Asp138, and His176 each coordinate Zn(2+).

Belongs to the metallo-beta-lactamase superfamily. Glyoxalase II family. As to quaternary structure, monomer. The cofactor is Zn(2+).

The catalysed reaction is an S-(2-hydroxyacyl)glutathione + H2O = a 2-hydroxy carboxylate + glutathione + H(+). Its pathway is secondary metabolite metabolism; methylglyoxal degradation; (R)-lactate from methylglyoxal: step 2/2. In terms of biological role, thiolesterase that catalyzes the hydrolysis of S-D-lactoyl-glutathione to form glutathione and D-lactic acid. This is Hydroxyacylglutathione hydrolase from Parasynechococcus marenigrum (strain WH8102).